The following is a 348-amino-acid chain: D-alanine--D-alanine ligase (348 aa).

The 203-residue stretch at 132–334 folds into the ATP-grasp domain; that stretch reads KRVLESIGIP…YPDLIEELVT (203 aa). Residue 162–217 participates in ATP binding; that stretch reads LARLTFPIFVKPANMGSSVGISKAQTKVELRKAIQLALTYDSRVLIEQGVVAREIE. 3 residues coordinate Mg(2+): Asp288, Glu301, and Asn303.

This sequence belongs to the D-alanine--D-alanine ligase family. Mg(2+) serves as cofactor. Mn(2+) is required as a cofactor.

It localises to the cytoplasm. It carries out the reaction 2 D-alanine + ATP = D-alanyl-D-alanine + ADP + phosphate + H(+). It functions in the pathway cell wall biogenesis; peptidoglycan biosynthesis. Its function is as follows. Cell wall formation. In Streptococcus pyogenes serotype M3 (strain SSI-1), this protein is D-alanine--D-alanine ligase.